A 1207-amino-acid chain; its full sequence is DNA-directed RNA polymerase, mitochondrial (1207 aa).

The transit peptide at 1-41 (MSALRWTRSAAGLGRVLRSPGPHRPPSEEGTFGGFCSSRRS) directs the protein to the mitochondrion. Disordered regions lie at residues 1-48 (MSAL…SPRE) and 82-103 (KKVQ…KLEA). PPR repeat units follow at residues 232 to 266 (TLHM…GLSP) and 267 to 302 (DLCS…GFQP). The interval 702-724 (VPPPRSEAPRPARYQLPPGSTPV) is disordered. Residues 773–1207 (FRGRTYPCPP…QVIRSTYFFS (435 aa)) form a mediates interaction with TEFM region. Residues Asp-893, Lys-962, and Asp-1121 contribute to the active site.

The protein belongs to the phage and mitochondrial RNA polymerase family. In terms of assembly, homodimer. Component of the mitochondrial transcription initiation complex, composed at least of TFB2M, TFAM and POLRMT. In this complex TFAM recruits POLRMT to the promoter whereas TFB2M induces structural changes in POLRMT to enable promoter opening and trapping of the DNA non-template strand. Upon metabolic stress, forms a complex composed of FOXO3, SIRT3 and mitochondrial RNA polymerase POLRMT; the complex is recruited to mtDNA in a SIRT3-dependent manner. Also forms a complex composed of FOXO3, SIRT3, TFAM and POLRMT. Interacts with TFB1M and TFB2M, leading to the stimulation of transcription. Interacts with TEFM. Interacts with MTRES1.

The protein resides in the mitochondrion. The enzyme catalyses RNA(n) + a ribonucleoside 5'-triphosphate = RNA(n+1) + diphosphate. Its function is as follows. DNA-dependent RNA polymerase catalyzes the transcription of mitochondrial DNA into RNA using the four ribonucleoside triphosphates as substrates. Component of the mitochondrial transcription initiation complex, composed at least of TFB2M, TFAM and POLRMT that is required for basal transcription of mitochondrial DNA. In this complex, TFAM recruits POLRMT to a specific promoter whereas TFB2M induces structural changes in POLRMT to enable promoter opening and trapping of the DNA non-template strand. Has DNA primase activity. Catalyzes the synthesis of short RNA primers that are necessary for the initiation of lagging-strand DNA synthesis from the origin of light-strand DNA replication (OriL). This Mus musculus (Mouse) protein is DNA-directed RNA polymerase, mitochondrial.